A 474-amino-acid polypeptide reads, in one-letter code: NADH-ubiquinone oxidoreductase chain 4 (474 aa).

13 helical membrane passes run 34–54 (SFFLMLVLALFCALFTFDLMF), 86–106 (LYGLILVFLCLLTGFVAISTV), 115–135 (LKFYLIFFQFFLAVLGFIKCS), 137–157 (LIAFFFFYEVLMLGSVLVVFF), 167–187 (AVIYFVAWTQLGSLFVLLACL), 211–231 (AMTIYSLLFVGFGIKFPIWPL), 242–262 (ASTGFSIYLSGFLVKTALFGF), 276–295 (TFFLAVLVAGVIDSSLNMWS), 302–322 (LVAYCTIQEMNLIAIFFLKGD), 325–345 (LIAYGFLFTIMHALMSTLMFF), 373–393 (ALAIIFMVLFFSGILGTLKFV), 405–425 (VSWPIGVIFVVVVSAIGLIGF), and 454–474 (YIIFLCFAGLIFLTFLPFLMI).

This sequence belongs to the complex I subunit 4 family.

The protein localises to the mitochondrion membrane. The enzyme catalyses a ubiquinone + NADH + 5 H(+)(in) = a ubiquinol + NAD(+) + 4 H(+)(out). Core subunit of the mitochondrial membrane respiratory chain NADH dehydrogenase (Complex I) that is believed to belong to the minimal assembly required for catalysis. Complex I functions in the transfer of electrons from NADH to the respiratory chain. The immediate electron acceptor for the enzyme is believed to be ubiquinone. The sequence is that of NADH-ubiquinone oxidoreductase chain 4 (ND4) from Paramecium tetraurelia.